The chain runs to 315 residues: Protein TIFY 4B (315 aa).

The interval 113 to 145 is disordered; sequence CHRRDSPRSAEFSGSSGQFVADKDSHKTVSVSP. The 36-residue stretch at 151 to 186 folds into the Tify domain; the sequence is TNAVVGQMTIFYSGKVNVYDGVPPEKARSIMHFAAN. The Jas motif lies at 233–260; that stretch reads QANRKVSLQRYLEKRKDRRFSKTKKAPG. A Nuclear localization signal motif is present at residues 235-242; it reads NRKVSLQR. A compositionally biased stretch (basic residues) spans 248-257; the sequence is KDRRFSKTKK. Positions 248-315 are disordered; the sequence is KDRRFSKTKK…LNSDLNSEDN (68 aa). Polar residues predominate over residues 293 to 315; the sequence is PENQTKSPNISVDLNSDLNSEDN.

The protein belongs to the TIFY/JAZ family. As to quaternary structure, interacts with AFPH2/NINJA.

The protein resides in the nucleus. In terms of biological role, regulates the arrest of dispersed meristematic cells during lamina development. The protein is Protein TIFY 4B (TIFY4B) of Arabidopsis thaliana (Mouse-ear cress).